Reading from the N-terminus, the 412-residue chain is Putative oxidoreductase bli-4, mitochondrial (412 aa).

A mitochondrion-targeting transit peptide spans 1-55 (MSTKLCQRIARTATLSPTSLVPRSSRLIPIVSSAAVRPSSAIPTRRPFSTTESRY). Ile108, Asn120, Asn186, Tyr269, Lys273, Val308, Thr310, and Gln312 together coordinate NADP(+). The Proton donor role is filled by Tyr269. The active-site Lowers pKa of active site Tyr is Lys273.

This sequence belongs to the short-chain dehydrogenases/reductases (SDR) family.

Its subcellular location is the mitochondrion. Its function is as follows. May play a role as an NAD-dependent dehydrogenase in the mitochondria. The sequence is that of Putative oxidoreductase bli-4, mitochondrial (bli-4) from Neurospora crassa (strain ATCC 24698 / 74-OR23-1A / CBS 708.71 / DSM 1257 / FGSC 987).